Reading from the N-terminus, the 620-residue chain is MSFDIAKYPTLALVDSTQELRLLPKESLPKLCDELRRYLLDSVSRSSGHFASGLGTVELTVALHYVYNTPFDQLIWDVGHQAYPHKILTGRRDKIGTIRQKGGLHPFPWRGESEYDVLSVGHSSTSISAGIGIAVAAEKEGKNRRTVCVIGDGAITAGMAFEAMNHAGDIRPDMLVVLNDNEMSISENVGALNNHLAQLLSGKLYSSLREGGKKVFSGVPPIKELLKRTEEHIKGMVVPGTLFEELGFNYIGPVDGHDVLGLITTLKNMRDLKGPQFLHIMTKKGRGYEPAEKDPITFHAVPKFDPSSGCLPKSSGGLPSYSKIFGDWLCETAAKDNKLMAITPAMREGSGMVEFSRKFPDRYFDVAIAEQHAVTFAAGLAIGGYKPIVAIYSTFLQRAYDQVLHDVAIQKLPVLFAIDRAGIVGADGQTHQGAFDLSYLRCIPEMVIMTPSDENECRQMLYTGYHYNDGPSAVRYPRGNAVGVELTPLEKLPIGKGIVKRRGEKLAILNFGTLMPDAAKVAESLNATLVDMRFVKPLDEALILEMAASHEALVTVEENAIMGGAGSGVNEVLMAHRKPVPVLNIGLPDFFIPQGTQEEMRAELGLDAAGMEAKIKAWLA.

Thiamine diphosphate contacts are provided by residues histidine 80 and 121–123; that span reads GHS. Residue aspartate 152 participates in Mg(2+) binding. Residues 153–154, asparagine 181, tyrosine 288, and glutamate 370 contribute to the thiamine diphosphate site; that span reads GA. Mg(2+) is bound at residue asparagine 181.

This sequence belongs to the transketolase family. DXPS subfamily. As to quaternary structure, homodimer. The cofactor is Mg(2+). Thiamine diphosphate serves as cofactor.

It carries out the reaction D-glyceraldehyde 3-phosphate + pyruvate + H(+) = 1-deoxy-D-xylulose 5-phosphate + CO2. It functions in the pathway metabolic intermediate biosynthesis; 1-deoxy-D-xylulose 5-phosphate biosynthesis; 1-deoxy-D-xylulose 5-phosphate from D-glyceraldehyde 3-phosphate and pyruvate: step 1/1. Catalyzes the acyloin condensation reaction between C atoms 2 and 3 of pyruvate and glyceraldehyde 3-phosphate to yield 1-deoxy-D-xylulose-5-phosphate (DXP). The protein is 1-deoxy-D-xylulose-5-phosphate synthase of Escherichia coli O139:H28 (strain E24377A / ETEC).